A 342-amino-acid polypeptide reads, in one-letter code: Succinylglutamate desuccinylase (342 aa).

Residues His62, Glu65, and His158 each contribute to the Zn(2+) site. The active site involves Glu222.

It belongs to the AspA/AstE family. Succinylglutamate desuccinylase subfamily. Zn(2+) serves as cofactor.

The enzyme catalyses N-succinyl-L-glutamate + H2O = L-glutamate + succinate. It functions in the pathway amino-acid degradation; L-arginine degradation via AST pathway; L-glutamate and succinate from L-arginine: step 5/5. Functionally, transforms N(2)-succinylglutamate into succinate and glutamate. This is Succinylglutamate desuccinylase from Shewanella frigidimarina (strain NCIMB 400).